We begin with the raw amino-acid sequence, 771 residues long: ATP-dependent RNA helicase DRS1 (771 aa).

Disordered regions lie at residues 1–96, 109–128, and 134–233; these read MAKK…LDGF, VESN…DLDG, and GGLA…KPVE. Residues 28–46 are compositionally biased toward acidic residues; sequence SDSEGENEIPDLEEESEVD. Residues 33–84 adopt a coiled-coil conformation; that stretch reads ENEIPDLEEESEVDQELKEEEKPKPKPKPKSKKNKKNKDINNDQEKTEEQEE. Basic and acidic residues predominate over residues 47–56; that stretch reads QELKEEEKPK. Positions 57-68 are enriched in basic residues; that stretch reads PKPKPKSKKNKK. Basic and acidic residues predominate over residues 69 to 79; the sequence is NKDINNDQEKT. A compositionally biased stretch (polar residues) spans 85-96; that stretch reads INPNFTFSLDGF. 2 stretches are compositionally biased toward acidic residues: residues 149–182 and 197–233; these read KNDE…DELA and ADDD…KPVE. The Q motif signature appears at 258–286; it reads TTFQSLQLSRPVLKGLSQLGYTKPSPIQS. The Helicase ATP-binding domain occupies 289-465; the sequence is IPIALLGKDI…QLSLQKPVRV (177 aa). 302–309 lines the ATP pocket; that stretch reads AVTGSGKT. The DEAD box signature appears at 412–415; that stretch reads DEAD. Residues 476 to 643 form the Helicase C-terminal domain; that stretch reads KLVQEFVRIR…RNSKQGKAVS (168 aa). The span at 695-717 shows a compositional bias: basic and acidic residues; the sequence is EKEIQSRPRRTWFESEKDKKHQT. Residues 695–771 form a disordered region; that stretch reads EKEIQSRPRR…KPKSNGKNKK (77 aa). Composition is skewed to basic residues over residues 725–736 and 759–771; these read KHGKKVNSHKRK and VQKK…KNKK.

The protein belongs to the DEAD box helicase family. DDX27/DRS1 subfamily. In terms of assembly, associates with pre-ribosomal particles.

The protein resides in the nucleus. It localises to the nucleolus. The catalysed reaction is ATP + H2O = ADP + phosphate + H(+). Functionally, ATP-binding RNA helicase involved in ribosome assembly. The polypeptide is ATP-dependent RNA helicase DRS1 (DRS1) (Debaryomyces hansenii (strain ATCC 36239 / CBS 767 / BCRC 21394 / JCM 1990 / NBRC 0083 / IGC 2968) (Yeast)).